Consider the following 157-residue polypeptide: Crossover junction endodeoxyribonuclease RuvC (157 aa).

Catalysis depends on residues Asp-7, Glu-67, and Asp-140. Mg(2+) is bound by residues Asp-7, Glu-67, and Asp-140.

The protein belongs to the RuvC family. In terms of assembly, homodimer which binds Holliday junction (HJ) DNA. The HJ becomes 2-fold symmetrical on binding to RuvC with unstacked arms; it has a different conformation from HJ DNA in complex with RuvA. In the full resolvosome a probable DNA-RuvA(4)-RuvB(12)-RuvC(2) complex forms which resolves the HJ. Mg(2+) serves as cofactor.

Its subcellular location is the cytoplasm. It carries out the reaction Endonucleolytic cleavage at a junction such as a reciprocal single-stranded crossover between two homologous DNA duplexes (Holliday junction).. In terms of biological role, the RuvA-RuvB-RuvC complex processes Holliday junction (HJ) DNA during genetic recombination and DNA repair. Endonuclease that resolves HJ intermediates. Cleaves cruciform DNA by making single-stranded nicks across the HJ at symmetrical positions within the homologous arms, yielding a 5'-phosphate and a 3'-hydroxyl group; requires a central core of homology in the junction. The consensus cleavage sequence is 5'-(A/T)TT(C/G)-3'. Cleavage occurs on the 3'-side of the TT dinucleotide at the point of strand exchange. HJ branch migration catalyzed by RuvA-RuvB allows RuvC to scan DNA until it finds its consensus sequence, where it cleaves and resolves the cruciform DNA. In Rickettsia rickettsii (strain Iowa), this protein is Crossover junction endodeoxyribonuclease RuvC.